The following is a 77-amino-acid chain: uncharacterized protein (77 aa).

This is an uncharacterized protein from Xylella fastidiosa (strain 9a5c).